A 355-amino-acid polypeptide reads, in one-letter code: 3-dehydroquinate synthase (355 aa).

NAD(+) is bound by residues E71–K76, G105–D109, T129–S130, K142, and K151. The Zn(2+) site is built by E184, H246, and H263.

It belongs to the sugar phosphate cyclases superfamily. Dehydroquinate synthase family. The cofactor is NAD(+). Co(2+) serves as cofactor. Zn(2+) is required as a cofactor.

The protein localises to the cytoplasm. It catalyses the reaction 7-phospho-2-dehydro-3-deoxy-D-arabino-heptonate = 3-dehydroquinate + phosphate. It functions in the pathway metabolic intermediate biosynthesis; chorismate biosynthesis; chorismate from D-erythrose 4-phosphate and phosphoenolpyruvate: step 2/7. Functionally, catalyzes the conversion of 3-deoxy-D-arabino-heptulosonate 7-phosphate (DAHP) to dehydroquinate (DHQ). The protein is 3-dehydroquinate synthase of Streptococcus pneumoniae serotype 4 (strain ATCC BAA-334 / TIGR4).